We begin with the raw amino-acid sequence, 434 residues long: Septin-6 (434 aa).

N-acetylalanine is present on A2. The residue at position 27 (S27) is a Phosphoserine. The 267-residue stretch at 39-305 (QGFCFNILCV…ELYRRCKLEE (267 aa)) folds into the Septin-type G domain. Residues 49-56 (GETGLGKS) are G1 motif. Residues 49–56 (GETGLGKS), G104, 185–193 (KSDAISKSE), G239, and R254 contribute to the GTP site. The tract at residues 101–104 (STVG) is G3 motif. Residues 184–187 (AKSD) are G4 motif. Positions 321–407 (QETYEAKRNE…QRKAAAELLQ (87 aa)) form a coiled coil. K367 carries the N6-acetyllysine modification. Positions 403–434 (AELLQSQGSQAGGSQTLKRDKEKKNNPWLCIE) are disordered. The segment covering 407–417 (QSQGSQAGGSQ) has biased composition (low complexity). The residue at position 416 (S416) is a Phosphoserine. Position 418 is a phosphothreonine (T418).

It belongs to the TRAFAC class TrmE-Era-EngA-EngB-Septin-like GTPase superfamily. Septin GTPase family. As to quaternary structure, septins polymerize into heterooligomeric protein complexes that form filaments, and associate with cellular membranes, actin filaments and microtubules. GTPase activity is required for filament formation. Filaments are assembled from asymmetrical heterotrimers, composed of SEPTIN2, SEPTIN6 and SEPTIN7 that associate head-to-head to form a hexameric unit. Within the trimer, directly interacts with SEPTIN2 and SEPTIN7. Also interacts with SEPTIN9 and SEPTIN12. Interaction with SEPTIN12 alters filament structure. Component of a septin core octameric complex consisting of SEPTIN12, SEPTIN7, SEPTIN6 and SEPTIN2 or SEPTIN4 in the order 12-7-6-2-2-6-7-12 or 12-7-6-4-4-6-7-12 and located in the sperm annulus. Interacts with SOCS7. Interacts with HNRNPA1. As to expression, expressed in the cerebral cortex (at protein level). Associated with synaptic vesicles in various brain regions, including glomeruli of the olfactory bulb (at protein level).

Its subcellular location is the cytoplasm. It is found in the cytoskeleton. The protein localises to the spindle. It localises to the chromosome. The protein resides in the centromere. Its subcellular location is the kinetochore. It is found in the cleavage furrow. The protein localises to the midbody. It localises to the cell projection. The protein resides in the cilium. Its subcellular location is the flagellum. Filament-forming cytoskeletal GTPase. Required for normal organization of the actin cytoskeleton. Involved in cytokinesis. Forms a filamentous structure with SEPTIN12, SEPTIN6, SEPTIN2 and probably SEPTIN4 at the sperm annulus which is required for the structural integrity and motility of the sperm tail during postmeiotic differentiation. In Mus musculus (Mouse), this protein is Septin-6.